The following is a 220-amino-acid chain: 7-cyano-7-deazaguanine synthase (220 aa).

Residue Leu7–Ala17 participates in ATP binding. Residues Cys187, Cys195, Cys198, and Cys201 each contribute to the Zn(2+) site.

Belongs to the QueC family. Zn(2+) is required as a cofactor.

The catalysed reaction is 7-carboxy-7-deazaguanine + NH4(+) + ATP = 7-cyano-7-deazaguanine + ADP + phosphate + H2O + H(+). Its pathway is purine metabolism; 7-cyano-7-deazaguanine biosynthesis. Catalyzes the ATP-dependent conversion of 7-carboxy-7-deazaguanine (CDG) to 7-cyano-7-deazaguanine (preQ(0)). The polypeptide is 7-cyano-7-deazaguanine synthase (Methanospirillum hungatei JF-1 (strain ATCC 27890 / DSM 864 / NBRC 100397 / JF-1)).